The sequence spans 450 residues: TATA box-binding protein-associated factor RNA polymerase I subunit A (450 aa).

As to quaternary structure, component of the transcription factor SL1/TIF-IB complex, composed of TBP and at least TAF1A, TAF1B, TAF1C and TAF1D. In the complex interacts directly with TBP, TAF1A and TAF1B. Interaction of the SL1/TIF-IB subunits with TBP excludes interaction of TBP with the transcription factor IID (TFIID) subunits. Interacts with UBFT. Interacts with CEBPA (isoform 1 and isoform 4). Part of Pol I pre-initiation complex (PIC), in which Pol I core assembles with RRN3 and promoter-bound UTBF and SL1/TIF-IB complex.

The protein localises to the nucleus. Its subcellular location is the nucleolus. Functionally, component of the transcription factor SL1/TIF-IB complex, which is involved in the assembly of the PIC (pre-initiation complex) during RNA polymerase I-dependent transcription. The rate of PIC formation probably is primarily dependent on the rate of association of SL1/TIF-IB with the rDNA promoter. SL1/TIF-IB is involved in stabilization of nucleolar transcription factor 1/UBTF on rDNA. Formation of SL1/TIF-IB excludes the association of TBP with TFIID subunits. The chain is TATA box-binding protein-associated factor RNA polymerase I subunit A (TAF1A) from Homo sapiens (Human).